The chain runs to 753 residues: LIM domain and actin-binding protein 1 (753 aa).

Position 1 is an N-acetylmethionine (Met-1). Residue Ser-15 is modified to Phosphoserine. Residues 46–56 (EEANMERKKNN) show a composition bias toward basic and acidic residues. Disordered regions lie at residues 46–66 (EEAN…HFRR) and 82–186 (GAEF…TSGK). Ser-132 carries the post-translational modification Phosphoserine. Basic and acidic residues predominate over residues 143-152 (PRSENSHDFK). The Required for interaction with NPC1L1 signature appears at 164–166 (CLG). Over residues 167-177 (DSRHEAEKPET) the composition is skewed to basic and acidic residues. Ser-225, Ser-230, Ser-242, and Ser-263 each carry phosphoserine. Disordered stretches follow at residues 276 to 326 (AAVS…VSTT) and 341 to 379 (TCNS…TAKK). The span at 278–291 (VSKQSSPASYTNEL) shows a compositional bias: polar residues. Positions 292 to 305 (KTSESKTHKWEQKE) are enriched in basic and acidic residues. Residues 342 to 351 (CNSQVKSEAQ) are compositionally biased toward polar residues. Phosphoserine occurs at positions 348, 360, 367, and 372. Over residues 363 to 375 (ARTSSLPESSPSK) the composition is skewed to polar residues. Positions 386-446 (ESCVECQKTV…KPHFNQLFKS (61 aa)) constitute an LIM zinc-binding domain. The residue at position 437 (Lys-437) is an N6-succinyllysine. Residues Ser-467, Ser-485, and Ser-488 each carry the phosphoserine modification. Disordered regions lie at residues 467–493 (SDNE…GVED), 505–669 (SMEA…FELE), and 682–703 (EDDN…GWSG). Residues 491-511 (VEDAPIAKVGVLAASMEAKAS) form a required for interaction with MYO5B region. Basic and acidic residues-rich tracts occupy residues 512 to 525 (SQRE…ETKK) and 554 to 565 (WPPEDDVCKTEA). Residues 598–609 (SSIKSPKASSPS) are compositionally biased toward low complexity. A phosphoserine mark is found at Ser-599, Ser-602, Ser-607, and Ser-615. Basic and acidic residues predominate over residues 630–666 (MERKQTENARPSGEKENVGKSRWQGEEVPRSKDRSSF). A phosphoserine mark is found at Ser-692, Ser-720, and Ser-735.

As to quaternary structure, interacts with NPC1L1; bridges NPC1L1 with MYO5B. Interacts with MYO5B; bridges MYO5B with NPC1L1. Interacts with PXN; this complex stabilizes actin dynamics. Binds to G-actin and F-actin. Interacts with LUZP1 (via C-terminus); both proteins restrict ciliation and may work together to regulate this process. Binds RAB40B (GTP-bound); interaction influences LIMA1 subcellular localization in lamellipodia during cell migration. Phosphorylation of the C-terminal region by MAPK1/MAPK3 reduces its association with F-actin and contributes to actin filament reorganization and enhances cell motility. In terms of processing, ubiquitinated by the ECS(RAB40B) complex leading to its degradation. As to expression, highly expressed in the small intestine, including the duodenum, jejunum, and ileum. Low expression in the liver and very low expressed in the heart, spleen, lung, brain, and pancreas. Isoform Alpha is highly expressed in embryos from day 7-11 and in adult spleen and lung. Isoform Beta expression is highest in adult kidney, testis, lung and liver, intermediate in heart, brain, spleen, skeletal muscle and low in embryos.

Its subcellular location is the cytoplasm. The protein localises to the cell junction. It is found in the focal adhesion. The protein resides in the cytoskeleton. It localises to the stress fiber. Its subcellular location is the cell membrane. The protein localises to the cell projection. It is found in the ruffle. The protein resides in the lamellipodium. Actin-binding protein involved in actin cytoskeleton regulation and dynamics. Increases the number and size of actin stress fibers and inhibits membrane ruffling. Inhibits actin filament depolymerization. Bundles actin filaments, delays filament nucleation and reduces formation of branched filaments. Acts as a negative regulator of primary cilium formation. Plays a role in cholesterol homeostasis. Influences plasma cholesterol levels through regulation of intestinal cholesterol absorption. May act as a scaffold protein by regulating NPC1L1 transportation, an essential protein for cholesterol absorption, to the plasma membrane by recruiting MYO5B to NPC1L1, and thus facilitates cholesterol uptake. The protein is LIM domain and actin-binding protein 1 (Lima1) of Mus musculus (Mouse).